Consider the following 330-residue polypeptide: Aspartate--ammonia ligase (330 aa).

Belongs to the class-II aminoacyl-tRNA synthetase family. AsnA subfamily.

It is found in the cytoplasm. The enzyme catalyses L-aspartate + NH4(+) + ATP = L-asparagine + AMP + diphosphate + H(+). It functions in the pathway amino-acid biosynthesis; L-asparagine biosynthesis; L-asparagine from L-aspartate (ammonia route): step 1/1. In Actinobacillus succinogenes (strain ATCC 55618 / DSM 22257 / CCUG 43843 / 130Z), this protein is Aspartate--ammonia ligase.